Here is a 286-residue protein sequence, read N- to C-terminus: Homoserine kinase (286 aa).

Residue 78-88 participates in ATP binding; it reads PLARGLGSSSS.

This sequence belongs to the GHMP kinase family. Homoserine kinase subfamily.

It is found in the cytoplasm. It carries out the reaction L-homoserine + ATP = O-phospho-L-homoserine + ADP + H(+). It functions in the pathway amino-acid biosynthesis; L-threonine biosynthesis; L-threonine from L-aspartate: step 4/5. Functionally, catalyzes the ATP-dependent phosphorylation of L-homoserine to L-homoserine phosphate. The protein is Homoserine kinase of Streptococcus equi subsp. zooepidemicus (strain H70).